Reading from the N-terminus, the 190-residue chain is Dynein axonemal light chain 1 (190 aa).

An N-acetylalanine modification is found at Ala2. LRR repeat units follow at residues 49-70 (NCEK…NGLK), 71-92 (NLRI…EAVG), 94-115 (TLEE…HVMK), and 116-137 (KLKI…VKLA). Ser56 is subject to Phosphoserine. An LRRCT domain is found at 150 to 190 (NPLEEKHSAEGNWVEEATKRVPKLKKLDGTPVIKEDEEEDN).

It belongs to the dynein light chain LC1-type family. In terms of assembly, interacts with ZMYND10 (via C-terminus). Interacts with DNAH5, a outer arm dynein heavy chain. Interacts with tubulin located within the A-tubule of the outer doublets in a ATP-independent manner.

Its subcellular location is the cytoplasm. The protein localises to the cytoskeleton. It localises to the cilium axoneme. Part of the multisubunit axonemal ATPase complexes that generate the force for cilia motility and govern beat frequency. Component of the outer arm dynein (ODA). May be involved in a mechanosensory feedback mechanism controlling ODA activity based on external conformational cues by tethering the outer arm dynein heavy chain (DNAH5) to the microtubule within the axoneme. Important for ciliary function in the airways and for the function of the cilia that produce the nodal flow essential for the determination of the left-right asymmetry. In Bos taurus (Bovine), this protein is Dynein axonemal light chain 1 (DNAL1).